A 1243-amino-acid polypeptide reads, in one-letter code: Inositol hexakisphosphate and diphosphoinositol-pentakisphosphate kinase 2 (1243 aa).

Ser38 is modified (phosphoserine). Lys53 to Lys54 contributes to the substrate binding site. 4 residues coordinate ATP: Arg134, Lys187, His194, and Arg213. Arg213–Lys214 contributes to the substrate binding site. Ser223 carries the phosphoserine modification. ATP-binding positions include Glu237–Met240 and Asp246–Lys248. Residues Lys248 and Arg262 each contribute to the substrate site. Residues Ser264, Asp309, and Asp321 to Asn323 each bind ATP. Ser326–Lys329 provides a ligand contact to substrate. The tract at residues Pro371–Met442 is polyphosphoinositide-binding domain. 2 disordered regions span residues Lys898–Val941 and His957–Ser1016. The segment covering Ala915–Val941 has biased composition (basic and acidic residues). Residues Ile958–Lys969 are compositionally biased toward basic residues. Phosphoserine occurs at positions 1006, 1016, 1074, 1091, 1165, 1172, and 1180. Residues Thr1185–Lys1243 are disordered. Residues Ala1195–Ser1209 show a composition bias toward low complexity. Residues Gly1210–Ser1220 show a composition bias toward polar residues. Phosphoserine is present on residues Ser1220 and Ser1221.

It belongs to the histidine acid phosphatase family. VIP1 subfamily.

It is found in the cytoplasm. The protein localises to the cytosol. The catalysed reaction is 1D-myo-inositol hexakisphosphate + ATP = 1-diphospho-1D-myo-inositol 2,3,4,5,6-pentakisphosphate + ADP. It carries out the reaction 5-diphospho-1D-myo-inositol 1,2,3,4,6-pentakisphosphate + ATP + H(+) = 1,5-bis(diphospho)-1D-myo-inositol 2,3,4,6-tetrakisphosphate + ADP. Its function is as follows. Bifunctional inositol kinase that acts in concert with the IP6K kinases IP6K1, IP6K2 and IP6K3 to synthesize the diphosphate group-containing inositol pyrophosphates diphosphoinositol pentakisphosphate, PP-InsP5, and bis-diphosphoinositol tetrakisphosphate, (PP)2-InsP4. PP-InsP5 and (PP)2-InsP4, also respectively called InsP7 and InsP8, regulate a variety of cellular processes, including apoptosis, vesicle trafficking, cytoskeletal dynamics, exocytosis, insulin signaling and neutrophil activation. Phosphorylates inositol hexakisphosphate (InsP6) at position 1 to produce PP-InsP5 which is in turn phosphorylated by IP6Ks to produce (PP)2-InsP4. Alternatively, phosphorylates PP-InsP5 at position 1, produced by IP6Ks from InsP6, to produce (PP)2-InsP4. Required for normal hearing. The protein is Inositol hexakisphosphate and diphosphoinositol-pentakisphosphate kinase 2 of Homo sapiens (Human).